We begin with the raw amino-acid sequence, 317 residues long: Melanocyte-stimulating hormone receptor (317 aa).

The Extracellular portion of the chain corresponds to 1–37 (MPMQGAQRRLLGSLNSTPTATPNLGLAANHTGAPCLE). N-linked (GlcNAc...) asparagine glycosylation is present at N29. A helical membrane pass occupies residues 38–63 (VSIPDGLFLSLGLVSLVENVLVVAAI). Residues 64-72 (AKNRNLHSP) are Cytoplasmic-facing. A helical transmembrane segment spans residues 73-93 (MYCFICCLALSDLLVSGSNML). At 94-118 (EMAVILLLEAGALATRASVVQQLQN) the chain is on the extracellular side. Residues 119 to 140 (TIDVLTCSSMLCSLCFLGAIAV) traverse the membrane as a helical segment. The Cytoplasmic portion of the chain corresponds to 141–163 (DRYVSIFYALRYHSIVTLPRARR). A helical transmembrane segment spans residues 164 to 183 (AIAAIWVASVLSSTLFIAYC). Over 184–191 (DHAAVLLC) the chain is Extracellular. A helical transmembrane segment spans residues 192-211 (LVVFFLAMLVLMAVLYVHML). The Cytoplasmic portion of the chain corresponds to 212 to 240 (ARACQHAQGITRLHKRQLPAHQGFGLRGA). The chain crosses the membrane as a helical span at residues 241 to 266 (ATLTILLGIFFLCWGPFFLHLMLVVL). Residues 267–279 (CPQHLTCSCIFKN) are Extracellular-facing. A helical membrane pass occupies residues 280–300 (FKVFLTLIICNTIIDPLIYAF). The Cytoplasmic segment spans residues 301 to 317 (RSQELCRTLREVLLCSW). A lipid anchor (S-palmitoyl cysteine) is attached at C315.

It belongs to the G-protein coupled receptor 1 family. Interacts with MGRN1, but does not undergo MGRN1-mediated ubiquitination; this interaction competes with GNAS-binding and thus inhibits agonist-induced cAMP production. Interacts with OPN3; the interaction results in a decrease in MC1R-mediated cAMP signaling and ultimately a decrease in melanin production in melanocytes.

The protein localises to the cell membrane. Receptor for MSH (alpha, beta and gamma) and ACTH. The activity of this receptor is mediated by G proteins which activate adenylate cyclase. Mediates melanogenesis, the production of eumelanin (black/brown) and phaeomelanin (red/yellow), via regulation of cAMP signaling in melanocytes. The protein is Melanocyte-stimulating hormone receptor (MC1R) of Alouatta pigra (Guatemalan howler monkey).